Consider the following 129-residue polypeptide: Large ribosomal subunit protein bL12c (129 aa).

Belongs to the bacterial ribosomal protein bL12 family. Homodimer. Part of the ribosomal stalk of the 50S ribosomal subunit. Forms a multimeric L10(L12)X complex, where L10 forms an elongated spine to which 2 to 4 L12 dimers bind in a sequential fashion. Binds GTP-bound translation factors.

The protein localises to the plastid. It is found in the chloroplast. In terms of biological role, forms part of the ribosomal stalk which helps the ribosome interact with GTP-bound translation factors. Is thus essential for accurate translation. The sequence is that of Large ribosomal subunit protein bL12c from Porphyra purpurea (Red seaweed).